An 85-amino-acid polypeptide reads, in one-letter code: Insecticidal toxin Vn1 (85 aa).

An N-terminal signal peptide occupies residues 1–23 (MFLYRLICLFILICIITVDISTS). Residues Cys-71 and Cys-84 are joined by a disulfide bond.

As to expression, highly expressed in the venom apparatus, and weakly expressed in residual body.

It is found in the secreted. In terms of biological role, endoparasitoid venom toxin that exhibits insecticidal activity against Tenebrio molitor pupae. Impacts genes related to immune response, environmental information processing, metabolism, and response to external stimuli in T.molitor, suggesting its involvement in the intricate parasitoid wasp-host interaction. The protein is Insecticidal toxin Vn1 of Aphidius gifuensis (Parasitoid wasp).